The chain runs to 1051 residues: Eukaryotic translation initiation factor 3 subunit A (1051 aa).

A coiled-coil region spans residues 92-121 (LKKFIELAEKKVTEAQAKADEIQSSLESAA). Residues 339-523 (MTKAASFVLL…GVLTFDTDIF (185 aa)) enclose the PCI domain. Positions 608–905 (RVLIEKKKEA…EAEARRAARK (298 aa)) form a coiled coil. 4 stretches are compositionally biased toward basic and acidic residues: residues 617–632 (AATD…EETR), 642–664 (EAEK…RDEQ), 794–901 (KEVS…EARR), and 916–926 (AELERPVERTA). Disordered stretches follow at residues 617–664 (AATD…RDEQ) and 794–1051 (KEVS…QQQQ). Low complexity-rich tracts occupy residues 948–961 (KEAA…AAAE) and 1010–1039 (SSSS…SPAP).

This sequence belongs to the eIF-3 subunit A family. As to quaternary structure, component of the eukaryotic translation initiation factor 3 (eIF-3) complex.

It is found in the cytoplasm. RNA-binding component of the eukaryotic translation initiation factor 3 (eIF-3) complex, which is involved in protein synthesis of a specialized repertoire of mRNAs and, together with other initiation factors, stimulates binding of mRNA and methionyl-tRNAi to the 40S ribosome. The eIF-3 complex specifically targets and initiates translation of a subset of mRNAs involved in cell proliferation. This Aspergillus fumigatus (strain CBS 144.89 / FGSC A1163 / CEA10) (Neosartorya fumigata) protein is Eukaryotic translation initiation factor 3 subunit A (tif32).